We begin with the raw amino-acid sequence, 356 residues long: uncharacterized protein (356 aa).

An N-terminal signal peptide occupies residues 1 to 21 (MHWSRFVGIFLVFSVFSLVNC). The disordered stretch occupies residues 293 to 317 (RPETDYEGANLPNIPSKKGSANQPV).

This is an uncharacterized protein from Acanthamoeba polyphaga mimivirus (APMV).